Consider the following 380-residue polypeptide: Cytochrome b (380 aa).

4 helical membrane passes run 34 to 54 (FGSL…LLAM), 78 to 99 (WLIR…YLHI), 114 to 134 (WNTG…GYVL), and 179 to 199 (FFAL…IHLT). The heme b site is built by histidine 84 and histidine 98. Residues histidine 183 and histidine 197 each coordinate heme b. Histidine 202 contributes to the a ubiquinone binding site. The next 4 membrane-spanning stretches (helical) occupy residues 227–247 (LKDT…ALFS), 289–309 (LGGV…PLLH), 321–341 (LSQL…WVGS), and 348–368 (FIII…ILLP).

This sequence belongs to the cytochrome b family. As to quaternary structure, the cytochrome bc1 complex contains 11 subunits: 3 respiratory subunits (MT-CYB, CYC1 and UQCRFS1), 2 core proteins (UQCRC1 and UQCRC2) and 6 low-molecular weight proteins (UQCRH/QCR6, UQCRB/QCR7, UQCRQ/QCR8, UQCR10/QCR9, UQCR11/QCR10 and a cleavage product of UQCRFS1). This cytochrome bc1 complex then forms a dimer. The cofactor is heme b.

It is found in the mitochondrion inner membrane. Component of the ubiquinol-cytochrome c reductase complex (complex III or cytochrome b-c1 complex) that is part of the mitochondrial respiratory chain. The b-c1 complex mediates electron transfer from ubiquinol to cytochrome c. Contributes to the generation of a proton gradient across the mitochondrial membrane that is then used for ATP synthesis. This is Cytochrome b (MT-CYB) from Fregetta tropica (Black-bellied storm-petrel).